Consider the following 299-residue polypeptide: Taste receptor type 2 member 1 (299 aa).

Over 1 to 9 the chain is Extracellular; sequence MLESHLIIY. Residues 10–30 form a helical membrane-spanning segment; that stretch reads FLLAVIQFLLGIFTNGIIVVV. At 31-55 the chain is on the cytoplasmic side; sequence NGIDLIKHRKMAPLDLLLSCLAVSR. A helical transmembrane segment spans residues 56-76; it reads IFLQLFIFYVNVIVIFFIEFI. Residues 77–81 lie on the Extracellular side of the membrane; sequence MCSAN. Residues 82–102 form a helical membrane-spanning segment; sequence CAILLFVNELELWLATWLGVF. The Cytoplasmic portion of the chain corresponds to 103–124; that stretch reads YCAKVASVRHPLFIWLKMRISK. A helical transmembrane segment spans residues 125–145; the sequence is LVPWMILGSLLYVSMICVFHS. The Extracellular portion of the chain corresponds to 146 to 178; the sequence is KYAGFMVPHFLRNFFSQNATIQKEDTLAIQIFS. N163 is a glycosylation site (N-linked (GlcNAc...) asparagine). The chain crosses the membrane as a helical span at residues 179–199; that stretch reads FVAEFSVPLLIFLVAVLLLIF. Residues 200–222 lie on the Cytoplasmic side of the membrane; it reads SLGRHTRQMRNTVAGSRVPGRGA. A helical membrane pass occupies residues 223–243; it reads PISALLSILSFLILYFSHCMI. The Extracellular portion of the chain corresponds to 244–257; the sequence is KVFLSSLKFHVRRF. Residues 258–278 form a helical membrane-spanning segment; it reads IFLFFILVIGIYPSGHSLILI. Residues 279–299 lie on the Cytoplasmic side of the membrane; sequence LGNPKLKQNAKKFLLHSKCCQ.

The protein belongs to the G-protein coupled receptor T2R family.

The protein localises to the membrane. Its function is as follows. Receptor that may play a role in the perception of bitterness and is gustducin-linked. May play a role in sensing the chemical composition of the gastrointestinal content. The activity of this receptor may stimulate alpha gustducin, mediate PLC-beta-2 activation and lead to the gating of TRPM5. This Pan paniscus (Pygmy chimpanzee) protein is Taste receptor type 2 member 1 (TAS2R1).